Reading from the N-terminus, the 95-residue chain is N(2)-fixation sustaining protein CowN (95 aa).

This sequence belongs to the CowN family.

Is required to sustain N(2)-dependent growth in the presence of low levels of carbon monoxide (CO). Probably acts by protecting the N(2) fixation ability of the nitrogenase complex, which is inactivated in the presence of CO. The chain is N(2)-fixation sustaining protein CowN from Allochromatium vinosum (strain ATCC 17899 / DSM 180 / NBRC 103801 / NCIMB 10441 / D) (Chromatium vinosum).